Consider the following 278-residue polypeptide: MSTLRVLHEKSELGKTTVYPKEYAPHLLLPIPRDLNRKTLNVNVSEPPPFYGYDLWNAYELSWLNEKGKPFAARGEFIIPATSSHLIESKSFKLYLNSFNNERFADAAAVSQTMKRDLSKRVNESVTVNFILHETEIPVAYSPKGSLLDVLDIAIDTYSPDPNLLSTSQETVTETLYSHLLKSNCPVTGQPDWGSIEIHYTGPKIDHVQLLKYIISYRNHEEFHEACVERFFMDILRHCRPQELTVQARYTRRGGLDINPYRSTNPTFSVQNHRSFRQ.

Residue 87-89 (IES) coordinates substrate. An NADPH-binding site is contributed by 89–90 (SK). Catalysis depends on cysteine 185, which acts as the Thioimide intermediate. Aspartate 192 functions as the Proton donor in the catalytic mechanism. Residue 224-225 (HE) participates in substrate binding. 253-254 (RG) is an NADPH binding site. Residues 255–278 (GLDINPYRSTNPTFSVQNHRSFRQ) are disordered. The span at 261-278 (YRSTNPTFSVQNHRSFRQ) shows a compositional bias: polar residues.

This sequence belongs to the GTP cyclohydrolase I family. QueF type 2 subfamily. As to quaternary structure, homodimer.

It localises to the cytoplasm. The enzyme catalyses 7-aminomethyl-7-carbaguanine + 2 NADP(+) = 7-cyano-7-deazaguanine + 2 NADPH + 3 H(+). Its pathway is tRNA modification; tRNA-queuosine biosynthesis. In terms of biological role, catalyzes the NADPH-dependent reduction of 7-cyano-7-deazaguanine (preQ0) to 7-aminomethyl-7-deazaguanine (preQ1). The chain is NADPH-dependent 7-cyano-7-deazaguanine reductase from Coxiella burnetii (strain CbuG_Q212) (Coxiella burnetii (strain Q212)).